Reading from the N-terminus, the 206-residue chain is Small ribosomal subunit protein uS4c (206 aa).

Residues 93–161 (MRLDNIVYRL…IEKNIELLDK (69 aa)) form the S4 RNA-binding domain.

Belongs to the universal ribosomal protein uS4 family. In terms of assembly, part of the 30S ribosomal subunit. Contacts protein S5. The interaction surface between S4 and S5 is involved in control of translational fidelity.

The protein resides in the plastid. Its function is as follows. One of the primary rRNA binding proteins, it binds directly to 16S rRNA where it nucleates assembly of the body of the 30S subunit. Functionally, with S5 and S12 plays an important role in translational accuracy. The polypeptide is Small ribosomal subunit protein uS4c (rps4) (Euglena longa (Euglenophycean alga)).